The sequence spans 123 residues: SPbeta prophage-derived uncharacterized protein YorE (123 aa).

This chain is SPbeta prophage-derived uncharacterized protein YorE (yorE), found in Bacillus subtilis (strain 168).